A 420-amino-acid chain; its full sequence is MCSTREEITEAFASLATALSRVLGLTFDALTTPERLALLEHCETARRQLPSVEHTLINQIGEQSTEEELGGKLGLTLADRLRITRSEAKRRVAEAADLGQRRALTGEPLPPLLTATAKAQRHGLIGDGHVEVIRAFVHRLPSWVDLKTLEKAERDLAKQATQYRPDQLAKLAARIMDCLNPDGDYTDEDRARRRGLTLGKQDVDGMSRLSGYVTPELRATIEAVWAKLAAPGMCNPEQKAPCVNGAPSKEQARRDTRSCPQRNHDALNAGLRSLLTSGNLGQHNGLPASIIVTTTLKDLEAAAGAGLTGGGTILPISDVIRLARHANHYLAIFDRGKALALYHTKRLASPAQRIMLYAKDSGCSAPGCDVPGYYCEVHHVTPYAQCRNTDVNDLTLGCGGHHPLAERGWTTRKNAHGDTE.

It belongs to the Rv1128c/1148c/1588c/1702c/1945/3466 family.

This is an uncharacterized protein from Mycobacterium tuberculosis (strain CDC 1551 / Oshkosh).